We begin with the raw amino-acid sequence, 343 residues long: E3 ubiquitin-protein ligase RNF113A (343 aa).

A2 is modified (N-acetylalanine). The important for interaction with SNRNP200/BRR2 stretch occupies residues 2–60 (AEQLSPGKAVDQVCTFLFKKPGRKGAAGRRKRPACDPEPGESGSSSDEGCTVVRPEKKR). S6 is subject to Phosphoserine. The segment covering 22–33 (PGRKGAAGRRKR) has biased composition (basic residues). The segment at 22-96 (PGRKGAAGRR…EEEENEPESL (75 aa)) is disordered. Over residues 41-50 (GESGSSSDEG) the composition is skewed to low complexity. The important for interaction with CXCR4 stretch occupies residues 50–61 (GCTVVRPEKKRV). A phosphoserine mark is found at S84 and S85. Residues 84-93 (SSEEEEENEP) are compositionally biased toward acidic residues. The segment at 196 to 224 (DYQPDICKDYKETGFCGFGDSCKFLHDRS) adopts a C3H1-type zinc-finger fold. S253 carries the post-translational modification Phosphoserine. The segment at 262–300 (CFICRQSFQNPVVTKCRHYFCESCALQHFRTTPRCYVCD) adopts an RING-type zinc-finger fold. Residues 322–343 (ATGEGGASDLPEDPDEDAIPIT) are disordered. Positions 331 to 343 (LPEDPDEDAIPIT) are enriched in acidic residues.

Component of pre-catalytic and catalytic spliceosome complexes. Interacts (via N-terminus) with the spliceosome subunit SNRNP200/BRR2. Component of the minor spliceosome, which splices U12-type introns. Within this complex, interacts with SCNM1 and CRIPT. In terms of tissue distribution, ubiquitous.

The protein resides in the nucleus. Its subcellular location is the nucleus speckle. The enzyme catalyses S-ubiquitinyl-[E2 ubiquitin-conjugating enzyme]-L-cysteine + [acceptor protein]-L-lysine = [E2 ubiquitin-conjugating enzyme]-L-cysteine + N(6)-ubiquitinyl-[acceptor protein]-L-lysine.. Its pathway is protein modification; protein ubiquitination. Functionally, required for pre-mRNA splicing as component of the spliceosome. As a component of the minor spliceosome, involved in the splicing of U12-type introns in pre-mRNAs. E3 ubiquitin-protein ligase that catalyzes the transfer of ubiquitin onto target proteins. Catalyzes polyubiquitination of SNRNP200/BRR2 with non-canonical 'Lys-63'-linked polyubiquitin chains. Plays a role in DNA repair via its role in the synthesis of 'Lys-63'-linked polyubiquitin chains that recruit ALKBH3 and the ASCC complex to sites of DNA damage by alkylating agents. Ubiquitinates CXCR4, leading to its degradation, and thereby contributes to the termination of CXCR4 signaling. The sequence is that of E3 ubiquitin-protein ligase RNF113A (RNF113A) from Homo sapiens (Human).